The following is a 41-amino-acid chain: Cytochrome b559 subunit beta (41 aa).

Residues 16–32 form a helical membrane-spanning segment; that stretch reads WLAVHALAVPTVFFLGS. Residue H20 coordinates heme.

It belongs to the PsbE/PsbF family. In terms of assembly, heterodimer of an alpha subunit and a beta subunit. PSII is composed of 1 copy each of membrane proteins PsbA, PsbB, PsbC, PsbD, PsbE, PsbF, PsbH, PsbI, PsbJ, PsbK, PsbL, PsbM, PsbT, PsbX, PsbY, PsbZ, Psb30/Ycf12, at least 3 peripheral proteins of the oxygen-evolving complex and a large number of cofactors. It forms dimeric complexes. Heme b is required as a cofactor.

The protein resides in the plastid. Its subcellular location is the chloroplast thylakoid membrane. Its function is as follows. This b-type cytochrome is tightly associated with the reaction center of photosystem II (PSII). PSII is a light-driven water:plastoquinone oxidoreductase that uses light energy to abstract electrons from H(2)O, generating O(2) and a proton gradient subsequently used for ATP formation. It consists of a core antenna complex that captures photons, and an electron transfer chain that converts photonic excitation into a charge separation. The polypeptide is Cytochrome b559 subunit beta (Nephroselmis olivacea (Green alga)).